Consider the following 272-residue polypeptide: Ethanolamine ammonia-lyase small subunit (272 aa).

Adenosylcob(III)alamin contacts are provided by valine 161, glutamate 182, and cysteine 211.

Belongs to the EutC family. The basic unit is a heterodimer which dimerizes to form tetramers. The heterotetramers trimerize; 6 large subunits form a core ring with 6 small subunits projecting outwards. It depends on adenosylcob(III)alamin as a cofactor.

It localises to the bacterial microcompartment. It catalyses the reaction ethanolamine = acetaldehyde + NH4(+). It functions in the pathway amine and polyamine degradation; ethanolamine degradation. Its function is as follows. Catalyzes the deamination of various vicinal amino-alcohols to oxo compounds. Allows this organism to utilize ethanolamine as the sole source of nitrogen and carbon in the presence of external vitamin B12. The polypeptide is Ethanolamine ammonia-lyase small subunit (Pseudomonas putida (strain ATCC 47054 / DSM 6125 / CFBP 8728 / NCIMB 11950 / KT2440)).